The sequence spans 424 residues: Serine--tRNA ligase (424 aa).

233 to 235 (TAE) is an L-serine binding site. An ATP-binding site is contributed by 264–266 (RKE). Glu-287 contributes to the L-serine binding site. ATP is bound at residue 351–354 (EISS). Ser-386 contacts L-serine.

This sequence belongs to the class-II aminoacyl-tRNA synthetase family. Type-1 seryl-tRNA synthetase subfamily. In terms of assembly, homodimer. The tRNA molecule binds across the dimer.

It localises to the cytoplasm. The catalysed reaction is tRNA(Ser) + L-serine + ATP = L-seryl-tRNA(Ser) + AMP + diphosphate + H(+). It catalyses the reaction tRNA(Sec) + L-serine + ATP = L-seryl-tRNA(Sec) + AMP + diphosphate + H(+). It participates in aminoacyl-tRNA biosynthesis; selenocysteinyl-tRNA(Sec) biosynthesis; L-seryl-tRNA(Sec) from L-serine and tRNA(Sec): step 1/1. Catalyzes the attachment of serine to tRNA(Ser). Is also able to aminoacylate tRNA(Sec) with serine, to form the misacylated tRNA L-seryl-tRNA(Sec), which will be further converted into selenocysteinyl-tRNA(Sec). The polypeptide is Serine--tRNA ligase (Elusimicrobium minutum (strain Pei191)).